The sequence spans 420 residues: Protein Rv2184c (420 aa).

The protein belongs to the arsA ATPase family.

The chain is Protein Rv2184c from Mycobacterium tuberculosis (strain ATCC 25618 / H37Rv).